A 238-amino-acid chain; its full sequence is Purine nucleoside phosphorylase DeoD-type (238 aa).

An a purine D-ribonucleoside-binding site is contributed by H4. Residues G20, R24, R43, and 87 to 90 (RIGS) contribute to the phosphate site. A purine D-ribonucleoside is bound by residues 181 to 183 (EME) and 205 to 206 (SD). Residue D206 is the Proton donor of the active site.

This sequence belongs to the PNP/UDP phosphorylase family. Homohexamer; trimer of homodimers.

It catalyses the reaction a purine D-ribonucleoside + phosphate = a purine nucleobase + alpha-D-ribose 1-phosphate. It carries out the reaction a purine 2'-deoxy-D-ribonucleoside + phosphate = a purine nucleobase + 2-deoxy-alpha-D-ribose 1-phosphate. Functionally, catalyzes the reversible phosphorolytic breakdown of the N-glycosidic bond in the beta-(deoxy)ribonucleoside molecules, with the formation of the corresponding free purine bases and pentose-1-phosphate. The polypeptide is Purine nucleoside phosphorylase DeoD-type (Mycoplasma genitalium (strain ATCC 33530 / DSM 19775 / NCTC 10195 / G37) (Mycoplasmoides genitalium)).